The primary structure comprises 458 residues: UDP-glycosyltransferase 76G1 (458 aa).

The active-site Proton acceptor is His25. His25 is a rebaudioside A binding site. His25 provides a ligand contact to rubusoside. Asn27 contacts UDP. Residue Asp124 is the Charge relay of the active site. Rebaudioside A contacts are provided by residues 146 to 147 (TS) and His155. Residues Ser283, 338-339 (WV), and 356-364 (HSGWNSTLE) contribute to the UDP site. Residues Trp359 and 380 to 381 (DQ) contribute to the rebaudioside A site.

The protein belongs to the UDP-glycosyltransferase family. As to quaternary structure, monomer.

The enzyme catalyses steviolbioside + UDP-alpha-D-glucose = rebaudioside B + UDP + H(+). It carries out the reaction stevioside + UDP-alpha-D-glucose = rebaudioside A + UDP + H(+). It catalyses the reaction rebaudioside E + UDP-alpha-D-glucose = rebaudioside D + UDP + H(+). The catalysed reaction is rebaudioside D + UDP-alpha-D-glucose = rebaudioside M + UDP + H(+). Functionally, involved in the biosynthesis of steviol glycosides in leaves. Converts the di-glycoside steviolbioside to the tri-glycoside rebaudioside B. Converts the tri-glycoside stevioside to the tetra-glycoside rebaudioside A. Converts the tetra-glycoside rebaudioside E to the penta-glycoside rebaudioside D. Converts the penta-glycoside rebaudioside D to the hexa-glycoside rebaudioside M. Can glucosylate rubusoside and rebaudioside A in vitro. This chain is UDP-glycosyltransferase 76G1, found in Stevia rebaudiana (Stevia).